The sequence spans 257 residues: Nickel import system ATP-binding protein NikD (257 aa).

The region spanning 4–245 (IDIQNLTIKN…HLHPYTEQLI (242 aa)) is the ABC transporter domain. 37–44 (GESGAGKS) contacts ATP.

This sequence belongs to the ABC transporter superfamily. As to quaternary structure, the complex is composed of two ATP-binding proteins (NikD and NikE), two transmembrane proteins (NikB and NikC) and a solute-binding protein (NikA).

It is found in the cell membrane. The catalysed reaction is Ni(2+)(out) + ATP + H2O = Ni(2+)(in) + ADP + phosphate + H(+). In terms of biological role, part of the ABC transporter complex NikABCDE (Opp2) involved in nickel import. Probably responsible for energy coupling to the transport system. The chain is Nickel import system ATP-binding protein NikD from Staphylococcus aureus (strain bovine RF122 / ET3-1).